A 241-amino-acid chain; its full sequence is 7-cyano-7-deazaguanine synthase (241 aa).

9–19 serves as a coordination point for ATP; that stretch reads LSGGLDSSTVL. Zn(2+)-binding residues include Cys-189, Cys-197, Cys-200, and Cys-203.

The protein belongs to the QueC family. Zn(2+) serves as cofactor.

It carries out the reaction 7-carboxy-7-deazaguanine + NH4(+) + ATP = 7-cyano-7-deazaguanine + ADP + phosphate + H2O + H(+). It participates in purine metabolism; 7-cyano-7-deazaguanine biosynthesis. Catalyzes the ATP-dependent conversion of 7-carboxy-7-deazaguanine (CDG) to 7-cyano-7-deazaguanine (preQ(0)). The sequence is that of 7-cyano-7-deazaguanine synthase from Thermoplasma volcanium (strain ATCC 51530 / DSM 4299 / JCM 9571 / NBRC 15438 / GSS1).